A 283-amino-acid chain; its full sequence is Bifunctional protein FolD (283 aa).

Residues 165–167 (GRS), Ser-190, and Val-231 each bind NADP(+).

The protein belongs to the tetrahydrofolate dehydrogenase/cyclohydrolase family. Homodimer.

The enzyme catalyses (6R)-5,10-methylene-5,6,7,8-tetrahydrofolate + NADP(+) = (6R)-5,10-methenyltetrahydrofolate + NADPH. It catalyses the reaction (6R)-5,10-methenyltetrahydrofolate + H2O = (6R)-10-formyltetrahydrofolate + H(+). It functions in the pathway one-carbon metabolism; tetrahydrofolate interconversion. Catalyzes the oxidation of 5,10-methylenetetrahydrofolate to 5,10-methenyltetrahydrofolate and then the hydrolysis of 5,10-methenyltetrahydrofolate to 10-formyltetrahydrofolate. The protein is Bifunctional protein FolD of Bacillus velezensis (strain DSM 23117 / BGSC 10A6 / LMG 26770 / FZB42) (Bacillus amyloliquefaciens subsp. plantarum).